The following is a 923-amino-acid chain: Neuropilin-1a (923 aa).

The first 19 residues, 1 to 19 (MHCGLVLILFTGIFLIVSA), serve as a signal peptide directing secretion. Residues 20–856 (LKNDKCGDNI…AGNMLKTLDP (837 aa)) are Extracellular-facing. 3 disulfide bridges follow: cysteine 25-cysteine 52, cysteine 80-cysteine 102, and cysteine 145-cysteine 171. CUB domains lie at 25-139 (CGDN…YEIF) and 145-263 (CSRN…FTVL). N-linked (GlcNAc...) asparagine glycosylation occurs at asparagine 148. The Ca(2+) site is built by glutamate 193, aspartate 207, and aspartate 248. A disulfide bridge links cysteine 204 with cysteine 226. A glycan (N-linked (GlcNAc...) asparagine) is linked at asparagine 259. 2 disulfide bridges follow: cysteine 273–cysteine 422 and cysteine 429–cysteine 581. F5/8 type C domains follow at residues 273–422 (CTEP…VYGC) and 429–581 (CSGM…LLGC). N-linked (GlcNAc...) asparagine glycosylation occurs at asparagine 520. Residues 587–624 (TVPPTTPAASTTPSDECDDDQANCHSGTGDGYDQTGGT) form a disordered region. An O-linked (Xyl...) (chondroitin sulfate) serine; alternate glycan is attached at serine 612. Serine 612 is a glycosylation site (O-linked (Xyl...) (heparan sulfate) serine; alternate). The MAM domain occupies 642 to 811 (FACDFGWAND…DNVNMADCKD (170 aa)). The helical transmembrane segment at 857–877 (ILITIIAMSALGVFLGAICGV) threads the bilayer. Residues 878-923 (VLYCACSHSGMSDRNLSALENYNFELVDGVKLKKDKLNSQNSYSEA) lie on the Cytoplasmic side of the membrane.

Belongs to the neuropilin family.

Its subcellular location is the membrane. Its function is as follows. Receptor involved in the development of the cardiovascular system, in angiogenesis, in the formation of certain neuronal circuits and in organogenesis outside the nervous system. It mediates the chemorepulsant activity of semaphorins. Regulates angiogenesis through a VEGF-dependent pathway. This is Neuropilin-1a (nrp1a) from Danio rerio (Zebrafish).